Consider the following 505-residue polypeptide: Pentatricopeptide repeat-containing protein At2g17033 (505 aa).

PPR repeat units follow at residues 243–277 (KTQA…KIKP), 278–312 (GLFE…GHKI), and 313–347 (DTVC…NVPF). A Smr domain is found at 413–503 (LDLHGMHLSS…AKGKTVKEWL (91 aa)).

Belongs to the PPR family. P subfamily.

The polypeptide is Pentatricopeptide repeat-containing protein At2g17033 (Arabidopsis thaliana (Mouse-ear cress)).